Reading from the N-terminus, the 67-residue chain is Large ribosomal subunit protein bL32 (67 aa).

A compositionally biased stretch (basic residues) spans 1-19 (MAVPKRKMSRSNTRARRSQ). Residues 1–21 (MAVPKRKMSRSNTRARRSQWK) form a disordered region.

Belongs to the bacterial ribosomal protein bL32 family.

In Clavibacter michiganensis subsp. michiganensis (strain NCPPB 382), this protein is Large ribosomal subunit protein bL32.